Consider the following 490-residue polypeptide: GTPase Der (490 aa).

EngA-type G domains are found at residues 3 to 166 (PVVA…MDDV) and 203 to 376 (IKLA…DSST). GTP is bound by residues 9 to 16 (GRPNVGKS), 56 to 60 (DTGGI), 118 to 121 (NKTD), 209 to 216 (GRPNVGKS), 256 to 260 (DTAGV), and 321 to 324 (NKWD). The region spanning 377-461 (RRVSTAMLTR…PIRIQFKEGE (85 aa)) is the KH-like domain.

Belongs to the TRAFAC class TrmE-Era-EngA-EngB-Septin-like GTPase superfamily. EngA (Der) GTPase family. In terms of assembly, associates with the 50S ribosomal subunit.

Its function is as follows. GTPase that plays an essential role in the late steps of ribosome biogenesis. In Salmonella choleraesuis (strain SC-B67), this protein is GTPase Der.